A 406-amino-acid chain; its full sequence is RILP-like protein 1 (406 aa).

Position 7 is a phosphoserine (Ser-7). Residues 10–97 (AALSALEKNV…RVERMDRIEK (88 aa)) enclose the RH1 domain. Position 47 is an S-nitrosocysteine (Cys-47). Residues 76-258 (ELDELRLELD…KLRERLQGEH (183 aa)) are a coiled coil. Disordered regions lie at residues 255–280 (QGEH…ESIS) and 330–354 (EIEE…QPES). Ser-259 is subject to Phosphoserine. The span at 262–280 (GEEEEAEIQPQPDGEESIS) shows a compositional bias: acidic residues. In terms of domain architecture, RH2 spans 294-359 (RPRFTLQELR…PQPESGIKRL (66 aa)).

The protein belongs to the RILPL family. In terms of assembly, interacts (when S-nitrosylated) with GAPDH. Interacts with RAB8A; interaction is dependent on the phosphorylation of 'Thr-72' of RAB8A. Interacts with RAB10 and RAB12; the interaction is dependent on the phosphorylation of 'Thr-73' of RAB10, and 'Ser-105' of RAB12. Post-translationally, S-nitrosylation is required for the interaction with GAPDH.

The protein resides in the cytoplasm. The protein localises to the cytosol. It is found in the cell projection. Its subcellular location is the cilium. It localises to the cytoskeleton. The protein resides in the microtubule organizing center. The protein localises to the centrosome. It is found in the centriole. Functionally, neuroprotective protein, which acts by sequestring GAPDH in the cytosol and prevent the apoptotic function of GAPDH in the nucleus. Competes with SIAH1 for binding GAPDH. Does not regulate lysosomal morphology and distribution. Plays a role in the regulation of cell shape and polarity. Plays a role in cellular protein transport, including protein transport away from primary cilia. Binds to RAB10 following LRRK2-mediated RAB10 phosphorylation which leads to inhibition of ciliogenesis. This chain is RILP-like protein 1 (Rilpl1), found in Mus musculus (Mouse).